Here is a 156-residue protein sequence, read N- to C-terminus: MDYQQKPPQSSDPSPSPPDRPPGIRSPETPSNNQNNDIEDIMACVTALEAALLPCLPARELQAIDRSPHPSHQIDVERHARDFMEAAKKLQLYFMGLKREDRAPSRAESLKKDIAVMEEELKTKDELIKKHMRLFQESQKLVKEQIEKHRDELEKV.

The segment at 1-38 is disordered; it reads MDYQQKPPQSSDPSPSPPDRPPGIRSPETPSNNQNNDI. The stretch at 104 to 156 forms a coiled coil; sequence PSRAESLKKDIAVMEEELKTKDELIKKHMRLFQESQKLVKEQIEKHRDELEKV.

It belongs to the Mediator complex subunit 28 family. Dimers. Component of the Mediator complex. Interacts with GEBPL.

It is found in the nucleus. Component of the Mediator complex, a coactivator involved in the regulated transcription of nearly all RNA polymerase II-dependent genes. Mediator functions as a bridge to convey information from gene-specific regulatory proteins to the basal RNA polymerase II transcription machinery. The Mediator complex, having a compact conformation in its free form, is recruited to promoters by direct interactions with regulatory proteins and serves for the assembly of a functional pre-initiation complex with RNA polymerase II and the general transcription factors. The polypeptide is Mediator of RNA polymerase II transcription subunit 28 (Arabidopsis thaliana (Mouse-ear cress)).